Here is a 513-residue protein sequence, read N- to C-terminus: Alpha-amylase mde5 (513 aa).

The first 25 residues, 1–25 (MKHNEVFGWTLKVLSFLLVVIPANA), serve as a signal peptide directing secretion. Residues C52 and C60 are joined by a disulfide bond. W105 lines the substrate pocket. A Ca(2+)-binding site is contributed by N143. A substrate-binding site is contributed by H144. N-linked (GlcNAc...) asparagine glycosylation is present at N162. A disulfide bridge links C171 with C184. Residues E182 and D195 each contribute to the Ca(2+) site. Residue R224 participates in substrate binding. Positions 226, 230, and 250 each coordinate Ca(2+). The active-site Nucleophile is the D226. 229 to 230 (KH) contacts substrate. Catalysis depends on E250, which acts as the Proton donor. G254 contacts substrate. Cysteines 260 and 304 form a disulfide. Residue D318 coordinates substrate. A glycan (N-linked (GlcNAc...) asparagine) is linked at N357. A substrate-binding site is contributed by R365. A disulfide bond links C454 and C488.

Belongs to the glycosyl hydrolase 13 family. Ca(2+) is required as a cofactor.

The protein resides in the endoplasmic reticulum. The enzyme catalyses Endohydrolysis of (1-&gt;4)-alpha-D-glucosidic linkages in polysaccharides containing three or more (1-&gt;4)-alpha-linked D-glucose units.. In Schizosaccharomyces pombe (strain 972 / ATCC 24843) (Fission yeast), this protein is Alpha-amylase mde5 (mde5).